Reading from the N-terminus, the 34-residue chain is Photosystem II reaction center protein M (34 aa).

Residues 5 to 25 (ILAFIATALFVLIPTAFLIIL) traverse the membrane as a helical segment.

It belongs to the PsbM family. As to quaternary structure, PSII is composed of 1 copy each of membrane proteins PsbA, PsbB, PsbC, PsbD, PsbE, PsbF, PsbH, PsbI, PsbJ, PsbK, PsbL, PsbM, PsbT, PsbX, PsbY, PsbZ, Psb30/Ycf12, at least 3 peripheral proteins of the oxygen-evolving complex and a large number of cofactors. It forms dimeric complexes.

Its subcellular location is the plastid. It is found in the chloroplast thylakoid membrane. In terms of biological role, one of the components of the core complex of photosystem II (PSII). PSII is a light-driven water:plastoquinone oxidoreductase that uses light energy to abstract electrons from H(2)O, generating O(2) and a proton gradient subsequently used for ATP formation. It consists of a core antenna complex that captures photons, and an electron transfer chain that converts photonic excitation into a charge separation. This subunit is found at the monomer-monomer interface. In Zygnema circumcarinatum (Green alga), this protein is Photosystem II reaction center protein M.